The following is a 211-amino-acid chain: Endo-1,4-beta-xylanase 6 (211 aa).

The signal sequence occupies residues 1-16; that stretch reads MKVTAAFAGLLVTALA. The 192-residue stretch at 19–210 folds into the GH11 domain; that stretch reads APEPVLVSRS…GAGSASVTIS (192 aa). Glu-106 functions as the Nucleophile in the catalytic mechanism. Glu-197 serves as the catalytic Proton donor.

Belongs to the glycosyl hydrolase 11 (cellulase G) family.

The protein resides in the secreted. It carries out the reaction Endohydrolysis of (1-&gt;4)-beta-D-xylosidic linkages in xylans.. Its pathway is glycan degradation; xylan degradation. Functionally, endo-1,4-beta-xylanase involved in the hydrolysis of xylan, a major structural heterogeneous polysaccharide found in plant biomass representing the second most abundant polysaccharide in the biosphere, after cellulose. This chain is Endo-1,4-beta-xylanase 6 (XYN6), found in Aspergillus niger.